The chain runs to 1174 residues: Ribonucleoside-diphosphate reductase large subunit-like protein (1174 aa).

The RIP homotypic interaction motif (RHIM) motif lies at 50-72 (PYVRIMNGVSGIQIGNHNAMSIA). Disordered stretches follow at residues 170 to 269 (ASNA…KLKP) and 291 to 325 (AAAA…DQSS). Composition is skewed to low complexity over residues 182–202 (ATSG…AATA), 233–243 (HVSVGTQATPS), and 291–316 (AAAA…AMAT).

The protein belongs to the ribonucleoside diphosphate reductase large chain family. In terms of assembly, self-assembles into homo-oligomeric amyloid fibrils. Interacts with host RIPK1 (via RIP homotypic interaction motif); this interaction inhibits RIPK1 ubiquitination thereby preventing effective activation of host NF-kappa-B. Interacts with host RIPK3 (via RIP homotypic interaction motif); this interaction disrupts RIPK3-RIPK1 interactions characteristic of TNF-alpha induced necroptosis, thereby suppressing this death pathway. Interacts (via RIP homotypic interaction motif) with host ZBP1 (via RIP homotypic interaction motif); this interaction inhibits recruitment of RIPK1 and RIPK3 to ZBP1 and prevents ZBP1-induced NF-kappa-B activation. In terms of processing, undergoes proteolytic cleavage, generating two peptides, a N-terminal and a 116 kDa. The N-terminal peptide retains RIPK1- and RIPK3-binding activity as well as cell death suppression activity.

It is found in the virion. It localises to the host cytoplasm. In terms of biological role, provides optimal viral replication conditions by promoting host cell survival and avoiding the host inflammatory response linked to NF-kappa-B activation. Blocks RIPK1 ubiquitination, thereby preventing NF-kappa-B activation and virally induced inflammatory response. Prevents host necroptosis by targeting RIPK3 thereby preventing the formation of necroptotic RIPK1-RIPK3 complexes. Also inhibits ZBP1-induced necroptosis. Does not have ribonucleotide reductase activity. Betaherpesviruses probably use another strategy to expand the dNTP pool in a quiescent host cell. In Murid herpesvirus 1 (strain Smith) (MuHV-1), this protein is Ribonucleoside-diphosphate reductase large subunit-like protein.